A 36-amino-acid chain; its full sequence is MVTKYSSIFMSPILSNPPILYFSDCSREXYQKXLTN.

In terms of domain architecture, Peptidase M12B spans 1–36 (MVTKYSSIFMSPILSNPPILYFSDCSREXYQKXLTN).

It belongs to the venom metalloproteinase (M12B) family. P-III subfamily. P-IIIa sub-subfamily. In terms of assembly, monomer. Zn(2+) serves as cofactor. Post-translationally, the N-terminus is blocked. Glycosylated. Expressed by the venom gland.

The protein resides in the secreted. Inhibited by EDTA, but not inhibited by iodoacetamide, PMSF and pepstatin A. Functionally, snake venom zinc metalloprotease that exhibits strong hemorrhagic activity. It also degrades alpha-chain of fibrinogen (FGA), but not the beta- and the gamma-chains. Possesses potent azocaseinolytic activity and cleaves insulin B-chain, hydrolyzing it at positions Ala(14)-Leu(15), followed by Tyr(16)-Leu(17) and His(10)-Leu(11). In vivo, subcutaneous injection into mice induces strong hemorrhage. This Vipera ammodytes ammodytes (Western sand viper) protein is Zinc metalloproteinase-disintegrin-like VaH1.